The primary structure comprises 537 residues: Cytochrome bd ubiquinol oxidase subunit 1 (537 aa).

The Cytoplasmic segment spans residues 1 to 24 (MISESVVDLSRLQFAMTALYHFLF). His-21 serves as a coordination point for heme b. A helical membrane pass occupies residues 25 to 44 (VPLTLGMTFLLAIMESVYVM). The Periplasmic segment spans residues 45 to 96 (TGKQVYKDMVKFWGKLFGINFALGVTTGITMEFQFGTNWAYYSHYVGDIFGA). The chain crosses the membrane as a helical span at residues 97–116 (PLAIEGLTAFFLESTFIGMF). Residues 117-131 (FFGWDRLSKIQHLAV) are Cytoplasmic-facing. The helical transmembrane segment at 132–151 (TWLVALGSNLSALWILVANG) threads the bilayer. The Periplasmic segment spans residues 152-189 (WMQHPVGAEFNFETMRMELVDFGALLLNPVAQVKFVHT). His-188 lines the heme b pocket. Residues 190–209 (VASGYVTGAVFVLAISSYYL) traverse the membrane as a helical segment. Residues 210-221 (LKKRDLGFARRS) are Cytoplasmic-facing. Residues 222–241 (FAIASAFGMASILSVIVLGD) traverse the membrane as a helical segment. The Periplasmic segment spans residues 242 to 394 (ESGYEVGEVQ…VASMFWSFRA (153 aa)). Residue Met-395 coordinates heme b. A helical membrane pass occupies residues 395–414 (MVGAGFAMLILFVCAFWASA). At 415-472 (RKNEESKPWLLKFALYSLPLPWIATQTGWFVAEHGRQPWTIGGVLPTHLSASSLSTGD) the chain is on the cytoplasmic side. The helical transmembrane segment at 473–492 (LWGSLIALIAFYTLLLVVEM) threads the bilayer. Residues 493-537 (YLMIRFARLGPSSLHTGRYHFEQLEQHAVKHASPSQADPQQPVNA) are Periplasmic-facing.

This sequence belongs to the cytochrome ubiquinol oxidase subunit 1 family. In terms of assembly, heterodimer of subunits I and II. Heme b is required as a cofactor. The cofactor is heme d cis-diol.

It is found in the cell inner membrane. It catalyses the reaction 2 a ubiquinol + O2(in) + 4 H(+)(in) = 2 a ubiquinone + 2 H2O(in) + 4 H(+)(out). May be involved in maintaining the low intracellular oxygen concentration required for nitrogen fixation. The protein is Cytochrome bd ubiquinol oxidase subunit 1 (cydA) of Azotobacter vinelandii.